We begin with the raw amino-acid sequence, 274 residues long: NH(3)-dependent NAD(+) synthetase (274 aa).

Position 46-53 (G46–S53) interacts with ATP. D52 is a Mg(2+) binding site. R140 provides a ligand contact to deamido-NAD(+). Position 160 (T160) interacts with ATP. E165 contacts Mg(2+). Residues K173 and D180 each contribute to the deamido-NAD(+) site. ATP is bound by residues K189 and T211. H260–K261 lines the deamido-NAD(+) pocket.

This sequence belongs to the NAD synthetase family. In terms of assembly, homodimer.

It catalyses the reaction deamido-NAD(+) + NH4(+) + ATP = AMP + diphosphate + NAD(+) + H(+). The protein operates within cofactor biosynthesis; NAD(+) biosynthesis; NAD(+) from deamido-NAD(+) (ammonia route): step 1/1. Functionally, catalyzes the ATP-dependent amidation of deamido-NAD to form NAD. Uses ammonia as a nitrogen source. This is NH(3)-dependent NAD(+) synthetase from Streptococcus equi subsp. zooepidemicus (strain H70).